The following is a 249-amino-acid chain: Segregation and condensation protein A (249 aa).

Belongs to the ScpA family. In terms of assembly, component of a cohesin-like complex composed of ScpA, ScpB and the Smc homodimer, in which ScpA and ScpB bind to the head domain of Smc. The presence of the three proteins is required for the association of the complex with DNA.

The protein localises to the cytoplasm. Functionally, participates in chromosomal partition during cell division. May act via the formation of a condensin-like complex containing Smc and ScpB that pull DNA away from mid-cell into both cell halves. The polypeptide is Segregation and condensation protein A (Listeria monocytogenes serotype 4b (strain CLIP80459)).